Consider the following 346-residue polypeptide: Uroporphyrinogen decarboxylase (346 aa).

Substrate is bound by residues 26 to 30 (RQAGR), Asp-76, Tyr-153, Ser-208, and His-323.

The protein belongs to the uroporphyrinogen decarboxylase family. As to quaternary structure, homodimer.

It localises to the cytoplasm. The enzyme catalyses uroporphyrinogen III + 4 H(+) = coproporphyrinogen III + 4 CO2. The protein operates within porphyrin-containing compound metabolism; protoporphyrin-IX biosynthesis; coproporphyrinogen-III from 5-aminolevulinate: step 4/4. Functionally, catalyzes the decarboxylation of four acetate groups of uroporphyrinogen-III to yield coproporphyrinogen-III. The protein is Uroporphyrinogen decarboxylase of Prochlorococcus marinus (strain MIT 9312).